Reading from the N-terminus, the 235-residue chain is LexA repressor (235 aa).

Positions 26–46 (FDEMKEALDLASKSGIHRLIT) form a DNA-binding region, H-T-H motif. The interval 72-104 (QATTAAPPKGRGAFRPQVLEGGGQAPTTSAQPQ) is disordered. Active-site for autocatalytic cleavage activity residues include serine 156 and lysine 193.

Belongs to the peptidase S24 family. Homodimer.

It catalyses the reaction Hydrolysis of Ala-|-Gly bond in repressor LexA.. Functionally, represses a number of genes involved in the response to DNA damage (SOS response), including recA and lexA. In the presence of single-stranded DNA, RecA interacts with LexA causing an autocatalytic cleavage which disrupts the DNA-binding part of LexA, leading to derepression of the SOS regulon and eventually DNA repair. The polypeptide is LexA repressor (Caulobacter sp. (strain K31)).